The chain runs to 955 residues: Bifunctional glutamine synthetase adenylyltransferase/adenylyl-removing enzyme (955 aa).

Positions 1-458 (MTAQAPLSVA…QFEQTFSDKQ (458 aa)) are adenylyl removase. The segment at 464–955 (CAAIWHADLL…GSIDAASPTP (492 aa)) is adenylyl transferase.

This sequence belongs to the GlnE family. Mg(2+) serves as cofactor.

The catalysed reaction is [glutamine synthetase]-O(4)-(5'-adenylyl)-L-tyrosine + phosphate = [glutamine synthetase]-L-tyrosine + ADP. The enzyme catalyses [glutamine synthetase]-L-tyrosine + ATP = [glutamine synthetase]-O(4)-(5'-adenylyl)-L-tyrosine + diphosphate. Functionally, involved in the regulation of glutamine synthetase GlnA, a key enzyme in the process to assimilate ammonia. When cellular nitrogen levels are high, the C-terminal adenylyl transferase (AT) inactivates GlnA by covalent transfer of an adenylyl group from ATP to specific tyrosine residue of GlnA, thus reducing its activity. Conversely, when nitrogen levels are low, the N-terminal adenylyl removase (AR) activates GlnA by removing the adenylyl group by phosphorolysis, increasing its activity. The regulatory region of GlnE binds the signal transduction protein PII (GlnB) which indicates the nitrogen status of the cell. This is Bifunctional glutamine synthetase adenylyltransferase/adenylyl-removing enzyme from Ralstonia nicotianae (strain ATCC BAA-1114 / GMI1000) (Ralstonia solanacearum).